The chain runs to 557 residues: Polypyrimidine tract-binding protein 1 (557 aa).

N-acetylmethionine is present on Met-1. Ser-16 bears the Phosphoserine mark. RRM domains are found at residues 59–143 (RVIH…SSPN), 184–260 (LRII…FSKL), and 363–437 (SVLL…LSKH). Lys-65 participates in a covalent cross-link: Glycyl lysine isopeptide (Lys-Gly) (interchain with G-Cter in SUMO2). Tyr-127 carries the post-translational modification Phosphotyrosine. Residue Thr-138 is modified to Phosphothreonine. Ser-141 is modified (phosphoserine). A Glycyl lysine isopeptide (Lys-Gly) (interchain with G-Cter in SUMO2) cross-link involves residue Lys-218. Phosphoserine is present on Ser-459. The RRM 4 domain maps to 480–555 (ATLHLSNIPP…HHLRVSFSKS (76 aa)).

Monomer. Part of a ternary complex containing KHSRP, PTBP1, PTBP2 and HNRPH1. Interacts with RAVER1 and SFPQ. Interacts with IVNS1ABP (via BACK domain); the interaction is direct.

It localises to the nucleus. In terms of biological role, plays a role in pre-mRNA splicing and in the regulation of alternative splicing events. Activates exon skipping of its own pre-mRNA during muscle cell differentiation. Binds to the polypyrimidine tract of introns. May promote RNA looping when bound to two separate polypyrimidine tracts in the same pre-mRNA. May promote the binding of U2 snRNP to pre-mRNA. Cooperates with RAVER1 to modulate switching between mutually exclusive exons during maturation of the TPM1 pre-mRNA. Represses the splicing of MAPT/Tau exon 10. Binds to polypyrimidine-rich controlling element (PCE) of CFTR and promotes exon skipping of CFTR exon 9, thereby antagonizing TIA1 and its role in exon inclusion of CFTR exon 9. Plays a role in the splicing of pyruvate kinase PKM by binding repressively to a polypyrimidine tract flanking PKM exon 9, inhibiting exon 9 inclusion and resulting in exon 10 inclusion and production of the PKM M2 isoform. In case of infection by picornaviruses, binds to the viral internal ribosome entry site (IRES) and stimulates the IRES-mediated translation. This is Polypyrimidine tract-binding protein 1 (PTBP1) from Homo sapiens (Human).